The primary structure comprises 460 residues: Lipase member H (460 aa).

Positions 1–24 (MLLRFYFNGLLFVGCLLSWGRSDT) are cleaved as a signal peptide. N-linked (GlcNAc...) asparagine glycosylation is found at Asn67 and Asn75. Residue Ser163 is the Nucleophile of the active site. N-linked (GlcNAc...) asparagine glycosylation occurs at Asn177. The active-site Charge relay system is the Asp187. Cys242 and Cys255 are disulfide-bonded. The Charge relay system role is filled by His257. 2 disulfides stabilise this stretch: Cys279–Cys290 and Cys293–Cys301. The N-linked (GlcNAc...) asparagine glycan is linked to Asn289. Asn366 is a glycosylation site (N-linked (GlcNAc...) asparagine). A disulfide bridge connects residues Cys436 and Cys455.

This sequence belongs to the AB hydrolase superfamily. Lipase family.

It is found in the secreted. The protein resides in the cell membrane. The enzyme catalyses 1-hexadecanoyl-2-(9Z-octadecenoyl)-sn-glycero-3-phosphate + H2O = 2-(9Z-octadecenoyl)-sn-glycero-3-phosphate + hexadecanoate + H(+). Functionally, hydrolyzes specifically phosphatidic acid (PA) to produce 2-acyl lysophosphatidic acid (LPA; a potent bioactive lipid mediator) and fatty acid. Does not hydrolyze other phospholipids, like phosphatidylserine (PS), phosphatidylcholine (PC) and phosphatidylethanolamine (PE) or triacylglycerol (TG). The chain is Lipase member H (liph) from Xenopus tropicalis (Western clawed frog).